The primary structure comprises 558 residues: MDSSPPKTITKALPRFSELKPPLSEDIIEALDRSGFEVCTPVQAETIPFLCSHKDVVVDAATGSGKTLAFLLPFIEIIRRSNSYPPKPHQVMGVIISPTRELSAQIHKVAEPFVSTLPNVNSVLLVGGREVEADMNTLEEEGANLLIGTPGRLSDMMKRMEFLDFRNLEILILDEADRLLDMGFQKQVNYIISRLPKQRRTGLFSATQTQAVADLAKAGLRNAMEVISGAESKSKTSSGLYCEYLKCEADQKSSQLVHLLIENKNKKLVVFFMTCACVDYWGLVLSKIPTLKSISFFSTHGKMDQKGRDTALASFTEASSGVLLCTDVAARGLDIPGIDYVVQYDPPQDPDVFIHRVGRTARMERQGRAIVFLMPKETDYVEFMRIRRVPLQERKCSENASDVIPIIRSLAIKDRAVLEKGLQAFVSFVRAYKEHHCSYIFSWKGLEIGKLAMGYGILSFPYISEVKQDRIGIVGFTPVQGITFEDIKYKNKSREKQRQQNLLARKDKLQQEKRGKRKKSSKEAVDDSNKASRKRKLTGRQRQTIQTAQDEEEMNLRL.

Positions 16–44 (FSELKPPLSEDIIEALDRSGFEVCTPVQA) match the Q motif motif. A Helicase ATP-binding domain is found at 47–226 (IPFLCSHKDV…KAGLRNAMEV (180 aa)). ATP is bound at residue 60 to 67 (AATGSGKT). Residues 174-177 (DEAD) carry the DEAD box motif. In terms of domain architecture, Helicase C-terminal spans 255–402 (QLVHLLIENK…ERKCSENASD (148 aa)). The segment at 506–558 (KDKLQQEKRGKRKKSSKEAVDDSNKASRKRKLTGRQRQTIQTAQDEEEMNLRL) is disordered. Positions 521 to 530 (SKEAVDDSNK) are enriched in basic and acidic residues. Residues 549-558 (QDEEEMNLRL) are compositionally biased toward acidic residues.

The protein belongs to the DEAD box helicase family. DDX55/SPB4 subfamily.

The catalysed reaction is ATP + H2O = ADP + phosphate + H(+). The chain is DEAD-box ATP-dependent RNA helicase 49 (RH49) from Arabidopsis thaliana (Mouse-ear cress).